The primary structure comprises 50 residues: Insulin-1 (50 aa).

Cystine bridges form between Cys7–Cys36, Cys19–Cys49, and Cys35–Cys40.

This sequence belongs to the insulin family. In terms of assembly, heterodimer of a B chain and an A chain linked by two disulfide bonds.

The protein resides in the secreted. Insulin decreases blood glucose concentration. It increases cell permeability to monosaccharides, amino acids and fatty acids. It accelerates glycolysis, the pentose phosphate cycle, and glycogen synthesis in liver. This chain is Insulin-1, found in Thunnus orientalis (North Pacific bluefin tuna).